The sequence spans 308 residues: Ribosomal RNA large subunit methyltransferase F (308 aa).

Belongs to the methyltransferase superfamily. METTL16/RlmF family.

The protein resides in the cytoplasm. The catalysed reaction is adenosine(1618) in 23S rRNA + S-adenosyl-L-methionine = N(6)-methyladenosine(1618) in 23S rRNA + S-adenosyl-L-homocysteine + H(+). Its function is as follows. Specifically methylates the adenine in position 1618 of 23S rRNA. This is Ribosomal RNA large subunit methyltransferase F from Escherichia fergusonii (strain ATCC 35469 / DSM 13698 / CCUG 18766 / IAM 14443 / JCM 21226 / LMG 7866 / NBRC 102419 / NCTC 12128 / CDC 0568-73).